A 641-amino-acid polypeptide reads, in one-letter code: Pre-mRNA-processing factor 39 (641 aa).

The disordered stretch occupies residues 1–50; the sequence is MEKSPEHCAEGSPSPATESAPSATEPPLPSTEPPLPSTEPPLPSTEPPLP. The segment covering 10 to 23 has biased composition (low complexity); it reads EGSPSPATESAPSA. Residues 24-50 are compositionally biased toward pro residues; sequence TEPPLPSTEPPLPSTEPPLPSTEPPLP. HAT repeat units lie at residues 50–82, 84–116, 118–150, 158–193, 304–336, 338–370, and 372–407; these read PPLP…YVEQ, NHLF…LEKK, NNIL…FLKE, ETSL…WETE, NFEE…FELE, GSNE…YMEN, and SVEG…QQGN.

Belongs to the PRP39 family.

It is found in the nucleus. In terms of biological role, involved in pre-mRNA splicing. This Xenopus laevis (African clawed frog) protein is Pre-mRNA-processing factor 39 (prpf39).